The following is a 245-amino-acid chain: Thiopurine S-methyltransferase (245 aa).

Residue 29–40 (WQEKWVSRRIGF) participates in S-adenosyl-L-methionine binding. Phe40 contributes to the substrate binding site. Lys58 is subject to N6-acetyllysine. Residues Leu69, Glu90, and Arg152 each coordinate S-adenosyl-L-methionine.

The protein belongs to the class I-like SAM-binding methyltransferase superfamily. TPMT family. As to quaternary structure, monomer.

Its subcellular location is the cytoplasm. It carries out the reaction S-adenosyl-L-methionine + a thiopurine = S-adenosyl-L-homocysteine + a thiopurine S-methylether.. The polypeptide is Thiopurine S-methyltransferase (TPMT) (Lycaon pictus (African wild dog)).